Here is a 137-residue protein sequence, read N- to C-terminus: ER-derived vesicles protein erv14 (137 aa).

Residues 1–9 (MMSFGSFVY) are Cytoplasmic-facing. The helical transmembrane segment at 10–30 (IACLLLNGANMLLQIFCVIMF) threads the bilayer. Topologically, residues 31-62 (SDLEMDYINPIDLCNKLNDLVMPEIISHTLVT) are extracellular. Residues 63–83 (LLLLLGKKWLLFLANLPLLVF) form a helical membrane-spanning segment. Residues 84–114 (HANQVIHKTHILDATEIFRQLGRHKRDNFIK) are Cytoplasmic-facing. The helical transmembrane segment at 115 to 135 (VTFYLIMFFTLLYCMVMSLIQ) threads the bilayer. Residues 136–137 (EE) are Extracellular-facing.

The protein belongs to the cornichon family.

It is found in the endoplasmic reticulum. It localises to the membrane. Its subcellular location is the golgi apparatus membrane. Its function is as follows. Regulates export of the secretory proteins from the endoplasmic reticulum in COPII-coated vesicles. This chain is ER-derived vesicles protein erv14 (erv14), found in Schizosaccharomyces pombe (strain 972 / ATCC 24843) (Fission yeast).